The chain runs to 462 residues: 3-isopropylmalate dehydratase large subunit (462 aa).

[4Fe-4S] cluster is bound by residues Cys337, Cys397, and Cys400.

It belongs to the aconitase/IPM isomerase family. LeuC type 1 subfamily. Heterodimer of LeuC and LeuD. It depends on [4Fe-4S] cluster as a cofactor.

It carries out the reaction (2R,3S)-3-isopropylmalate = (2S)-2-isopropylmalate. The protein operates within amino-acid biosynthesis; L-leucine biosynthesis; L-leucine from 3-methyl-2-oxobutanoate: step 2/4. Catalyzes the isomerization between 2-isopropylmalate and 3-isopropylmalate, via the formation of 2-isopropylmaleate. The chain is 3-isopropylmalate dehydratase large subunit from Listeria innocua serovar 6a (strain ATCC BAA-680 / CLIP 11262).